A 78-amino-acid polypeptide reads, in one-letter code: Gas vesicle protein A (78 aa).

Belongs to the gas vesicle GvpA family. In terms of assembly, the gas vesicle shell is 2 nm thick and consists of a single layer of this protein. It forms helical ribs nearly perpendicular to the long axis of the vesicle.

It is found in the gas vesicle shell. Functionally, gas vesicles are hollow, gas filled proteinaceous nanostructures found in some microorganisms. During planktonic growth they allow positioning of the organism at a favorable depth for light or nutrient acquisition. GvpA forms the protein shell. The polypeptide is Gas vesicle protein A (Halorubrum vacuolatum (Natronobacterium vacuolatum)).